Consider the following 621-residue polypeptide: Rab11 family-interacting protein 4A (621 aa).

EF-hand domains follow at residues 14–49 and 47–82; these read AFLK…FGQG and GQGD…IKGC. Ca(2+) is bound by residues Asp27, Asp29, Asp31, Tyr33, His38, Asp60, Asn62, Arg66, and Asp71. 2 disordered regions span residues 132 to 172 and 203 to 243; these read YSDE…KEEG and DYGE…GQTP. Residues 151–161 show a composition bias toward low complexity; it reads AADSGAGSESS. The segment covering 162-172 has biased composition (basic and acidic residues); the sequence is EGGRQDDKEEG. Positions 225–243 are enriched in polar residues; that stretch reads TNGFSDLGSSLPSSAGQTP. The stretch at 348–556 forms a coiled coil; the sequence is DLKSKLKQEN…LNGQILSLSL (209 aa). Residues 558-620 enclose the FIP-RBD domain; the sequence is EAKNLFACHT…DHNPSILEIK (63 aa).

Homodimer. Forms a complex with Rab11 (rab11a or rab11b) and arf6. In terms of tissue distribution, isoform 1 is predominantly expressed in neural tissues. Isoform B is expressed ubiquitously. In the developing retina, it is expressed in progenitors throughout the retina at early stages and becomes restricted to the ganglion cell layer and ciliary marginal zone as differentiation proceeds.

It localises to the recycling endosome membrane. The protein resides in the cleavage furrow. It is found in the midbody. Its subcellular location is the cytoplasmic vesicle. Functionally, acts as a regulator of endocytic traffic by participating in membrane delivery. Required for the abscission step in cytokinesis, possibly by acting as an 'address tag' delivering recycling endosome membranes to the cleavage furrow during late cytokinesis. May play a role in differentiation during retinal development. The chain is Rab11 family-interacting protein 4A (rab11fip4a) from Danio rerio (Zebrafish).